Consider the following 2507-residue polypeptide: Highly reducing polyketide synthase lcsB (2507 aa).

A Ketosynthase family 3 (KS3) domain is found at 2 to 393 (AEPIAVVGMA…GVNAHVIVES (392 aa)). The disordered stretch occupies residues 399 to 501 (NHDRGLSNGS…RNGYSGDDVE (103 aa)). 2 stretches are compositionally biased toward polar residues: residues 405–414 (SNGSTTSSSP) and 470–488 (NDTP…TSHT). The tract at residues 581 to 900 (WVFTGQGAQW…DESLLQLAGK (320 aa)) is malonyl-CoA:ACP transacylase (MAT) domain. Residues 953-1080 (HELLGSRVTE…GEARASVDKA (128 aa)) are N-terminal hotdog fold. The dehydratase (DH) domain stretch occupies residues 953 to 1232 (HELLGSRVTE…FKASALTRSD (280 aa)). The PKS/mFAS DH domain occupies 953-1234 (HELLGSRVTE…ASALTRSDDE (282 aa)). The active-site Proton acceptor; for dehydratase activity is H984. Residues 1092-1234 (ARTVDANEWY…ASALTRSDDE (143 aa)) form a C-terminal hotdog fold region. D1151 functions as the Proton donor; for dehydratase activity in the catalytic mechanism. A methyltransferase (CMet) domain region spans residues 1402-1570 (LGHTNPRLRI…EMVAAGFAEP (169 aa)). Positions 1793–2105 (GLLHTMGWSQ…GGRHIGKIIV (313 aa)) are enoyl reductase (ER) (ER) domain. The ketoreductase (KR) domain stretch occupies residues 2130 to 2303 (SYLLVGGLGG…ASVIDIGVMG (174 aa)). Positions 2425 to 2503 (EESTVIIATA…SLGDYIRTAL (79 aa)) constitute a Carrier domain. O-(pantetheine 4'-phosphoryl)serine is present on S2463.

The protein operates within secondary metabolite biosynthesis. Its function is as follows. Highly reducing polyketide synthase; part of the gene cluster that mediates the biosynthesis of the lipopeptide antibiotics leucinostatins that show extensive biological activities, including antimalarial, antiviral, antibacterial, antifungal, and antitumor activities, as well as phytotoxic. Leucinostatin A contains nine amino acid residues, including the unusual amino acid 4-methyl-L-proline (MePro), 2-amino-6-hydroxy-4-methyl-8-oxodecanoic acid (AHyMeOA), 3-hydroxyleucine (HyLeu), alpha-aminoisobutyric acid (AIB), beta-Ala, a 4-methylhex-2-enoic acid at the N-terminus as well as a N1,N1-dimethylpropane-1,2-diamine (DPD) at the C-terminus. The biosynthesis of leucinostatins is probably initiated with the assembly of 4-methylhex-2-enoic acid by a reducing PKS. Two reducing polyketide synthases, lcsB and lcsC, have been identified in the cluster and it is not clear which is the one that assembles 4-methylhex-2-enoic acid since both contain KS, AT, DH, cMT, ER, KR and ACP domains. The polyketide residue might be transferred to the NRPS lcsA, mediated by two additional enzymes, the acyl-CoA ligase lcsD and the thioesterase lcsE. The linear polyketide carboxylic acid, which is released from PKS, is converted to a CoA thioester by lcsD, and then lcsE hydrolyzes the thiol bond and shuttles the polyketide intermediate to lcsA. The C domain of the first module catalyzed the condensation of 4-methylhex-2-enoic acid and MePro carried by domain A1, followed by successive condensations of nine amino acids to trigger the elongation of the linear peptide. A5 and A6 domains of lcsA are proposed to incorporate leucine, A2 AHyMeOA, and A3 incorporates HyLeu. A4, A7 and A8 incorporate AIB. The AHyMeOA in leucinostatin A activated by the A2 might be produced by the second PKS (lcsB or lcsC) present within the cluster. The MePro is probably produced via leucine cyclization and may originate from a separate pathway, independent of the cluster. Another nonproteinogenic amino acid, beta-Ala, could be produced by an aspartic acid decarboxylase also localized outside of the cluster. Two candidates are VFPBJ_01400 and VFPBJ_10476. The final peptide scaffold may be released by the NAD(P)H-dependent thioester reductase (TE) at the C-terminal region of lcsA. Transamination of the lcsA product by the transaminase lcsP may produce DPD at the C-terminus. Further hydroxylation steps performed alternatively by the cytochrome P450 monooxygenases lcsI, lcsK andr lcsN then yield the non-methylated leucinostatins precursor. It is also possible that leucines can be hydroxylated prior to their incorporation into the peptide. Varying extents of methylation then lead to the formation of leucinostatins A and B. This chain is Highly reducing polyketide synthase lcsB, found in Purpureocillium lilacinum (Paecilomyces lilacinus).